The primary structure comprises 446 residues: Minor teichoic acid biosynthesis protein GgaA (446 aa).

It belongs to the glycosyltransferase 2 family.

Its pathway is cell wall biogenesis; poly(glucopyranosyl N-acetylgalactosamine 1-phosphate) teichoic acid biosynthesis. Involved in the biosynthesis of galactosamine-containing minor teichoic acid, a non-essential cell wall polymer in B.subtilis 168. This chain is Minor teichoic acid biosynthesis protein GgaA (ggaA), found in Bacillus subtilis (strain 168).